We begin with the raw amino-acid sequence, 298 residues long: Iron/alpha-ketoglutarate-dependent dioxygenase ausO (298 aa).

Histidine 130, aspartate 132, and histidine 211 together coordinate Fe cation.

The protein belongs to the PhyH family. In terms of assembly, homodimer. Fe cation serves as cofactor.

Its pathway is secondary metabolite biosynthesis; terpenoid biosynthesis. Its function is as follows. Iron/alpha-ketoglutarate-dependent dioxygenase; part of the gene cluster that mediates the biosynthesis of calidodehydroaustin, a fungal meroterpenoid. The first step of the pathway is the synthesis of 3,5-dimethylorsellinic acid by the polyketide synthase ausA. 3,5-dimethylorsellinic acid is then prenylated by the polyprenyl transferase ausN. Further epoxidation by the FAD-dependent monooxygenase ausM and cyclization by the probable terpene cyclase ausL lead to the formation of protoaustinoid A. Protoaustinoid A is then oxidized to spiro-lactone preaustinoid A3 by the combined action of the FAD-binding monooxygenases ausB and ausC, and the dioxygenase ausE. Acid-catalyzed keto-rearrangement and ring contraction of the tetraketide portion of preaustinoid A3 by ausJ lead to the formation of preaustinoid A4. The aldo-keto reductase ausK, with the help of ausH, is involved in the next step by transforming preaustinoid A4 into isoaustinone which is in turn hydroxylated by the P450 monooxygenase ausI to form austinolide. The cytochrome P450 monooxygenase ausG modifies austinolide to austinol. Austinol is further acetylated to austin by the O-acetyltransferase ausP, which spontaneously changes to dehydroaustin. The cytochrome P450 monooxygenase ausR then converts dehydroaustin is into 7-dehydrodehydroaustin. The hydroxylation catalyzed by ausR permits the O-acetyltransferase ausQ to add an additional acetyl group to the molecule, leading to the formation of acetoxydehydroaustin. The short chain dehydrogenase ausT catalyzes the reduction of the double bond present between carbon atoms 1 and 2 to convert 7-dehydrodehydroaustin into 1,2-dihydro-7-hydroxydehydroaustin. AusQ catalyzes not only an acetylation reaction but also the addition of the PKS ausV diketide product to 1,2-dihydro-7-hydroxydehydroaustin, forming precalidodehydroaustin. Finally, the iron/alpha-ketoglutarate-dependent dioxygenase converts precalidodehydroaustin into calidodehydroaustin. The polypeptide is Iron/alpha-ketoglutarate-dependent dioxygenase ausO (Aspergillus calidoustus).